The chain runs to 240 residues: LexA repressor (240 aa).

Residues 26-46 constitute a DNA-binding region (H-T-H motif); it reads FDEMKEALDLASKSGIHRLIT. Residues Ser161 and Lys199 each act as for autocatalytic cleavage activity in the active site.

The protein belongs to the peptidase S24 family. Homodimer.

The catalysed reaction is Hydrolysis of Ala-|-Gly bond in repressor LexA.. Its function is as follows. Represses a number of genes involved in the response to DNA damage (SOS response), including recA and lexA. In the presence of single-stranded DNA, RecA interacts with LexA causing an autocatalytic cleavage which disrupts the DNA-binding part of LexA, leading to derepression of the SOS regulon and eventually DNA repair. The chain is LexA repressor from Brucella melitensis biotype 1 (strain ATCC 23456 / CCUG 17765 / NCTC 10094 / 16M).